A 201-amino-acid polypeptide reads, in one-letter code: Holliday junction branch migration complex subunit RuvA (201 aa).

The interval 1-64 is domain I; it reads MIGRLHGKII…EDAHLLFGFA (64 aa). The domain II stretch occupies residues 65–143; sequence QKQDRTLFRE…GVAQSDFFEE (79 aa). The flexible linker stretch occupies residues 144–154; it reads HSVETIVATHS. The tract at residues 154–201 is domain III; sequence SHDPADEARDALVALGYKLADAEKMIKKVNKAGATSEQLIREALKASL.

Belongs to the RuvA family. As to quaternary structure, homotetramer. Forms an RuvA(8)-RuvB(12)-Holliday junction (HJ) complex. HJ DNA is sandwiched between 2 RuvA tetramers; dsDNA enters through RuvA and exits via RuvB. An RuvB hexamer assembles on each DNA strand where it exits the tetramer. Each RuvB hexamer is contacted by two RuvA subunits (via domain III) on 2 adjacent RuvB subunits; this complex drives branch migration. In the full resolvosome a probable DNA-RuvA(4)-RuvB(12)-RuvC(2) complex forms which resolves the HJ.

The protein localises to the cytoplasm. In terms of biological role, the RuvA-RuvB-RuvC complex processes Holliday junction (HJ) DNA during genetic recombination and DNA repair, while the RuvA-RuvB complex plays an important role in the rescue of blocked DNA replication forks via replication fork reversal (RFR). RuvA specifically binds to HJ cruciform DNA, conferring on it an open structure. The RuvB hexamer acts as an ATP-dependent pump, pulling dsDNA into and through the RuvAB complex. HJ branch migration allows RuvC to scan DNA until it finds its consensus sequence, where it cleaves and resolves the cruciform DNA. In Actinobacillus pleuropneumoniae serotype 5b (strain L20), this protein is Holliday junction branch migration complex subunit RuvA.